Consider the following 340-residue polypeptide: Putative methionyl-tRNA formyltransferase (340 aa).

The protein belongs to the Fmt family.

The protein resides in the mitochondrion. The protein localises to the mitochondrion matrix. It localises to the cytoplasm. The enzyme catalyses L-methionyl-tRNA(fMet) + (6R)-10-formyltetrahydrofolate = N-formyl-L-methionyl-tRNA(fMet) + (6S)-5,6,7,8-tetrahydrofolate + H(+). Formylates methionyl-tRNA in mitochondria and the cytoplasm. Responsible for the formylation of the N-terminally formylated (Nt-formylated) mitochondrial matrix proteins that are encoded by mitochondrial DNA. Nt-formylated proteins in the cytoplasm are strongly up-regulated in stationary phase or upon starvation for specific amino acids and are targeted for degradation by an E3 ubiquitin ligase-mediated fMet/N-end rule pathway. Increased Nt-formylation of cytosolic proteins appears to be important for adaptation to these stresses. The protein is Putative methionyl-tRNA formyltransferase (fmt1) of Schizosaccharomyces pombe (strain 972 / ATCC 24843) (Fission yeast).